Reading from the N-terminus, the 181-residue chain is Adenylate kinase (181 aa).

10 to 15 (GAGKGT) contributes to the ATP binding site. Positions 30-59 (STGDLFRANIGEGTPLGKEAKSYIDAGKLV) are NMP. AMP contacts are provided by residues Thr-31, Arg-36, 57–59 (KLV), 85–88 (GFPR), and Gln-92. Residues 126–132 (ARGRADD) are LID. An ATP-binding site is contributed by Arg-127. The AMP site is built by Arg-129 and Arg-140. Residue Gly-166 coordinates ATP.

The protein belongs to the adenylate kinase family. In terms of assembly, monomer.

The protein resides in the cytoplasm. The catalysed reaction is AMP + ATP = 2 ADP. The protein operates within purine metabolism; AMP biosynthesis via salvage pathway; AMP from ADP: step 1/1. Functionally, catalyzes the reversible transfer of the terminal phosphate group between ATP and AMP. Plays an important role in cellular energy homeostasis and in adenine nucleotide metabolism. The polypeptide is Adenylate kinase (Corynebacterium diphtheriae (strain ATCC 700971 / NCTC 13129 / Biotype gravis)).